A 320-amino-acid polypeptide reads, in one-letter code: tRNA uridine(34) hydroxylase (320 aa).

One can recognise a Rhodanese domain in the interval 123–217 (EDENTVILDA…YGKDPETKGL (95 aa)). C177 acts as the Cysteine persulfide intermediate in catalysis.

The protein belongs to the TrhO family.

The enzyme catalyses uridine(34) in tRNA + AH2 + O2 = 5-hydroxyuridine(34) in tRNA + A + H2O. Its function is as follows. Catalyzes oxygen-dependent 5-hydroxyuridine (ho5U) modification at position 34 in tRNAs. This is tRNA uridine(34) hydroxylase from Staphylococcus epidermidis (strain ATCC 35984 / DSM 28319 / BCRC 17069 / CCUG 31568 / BM 3577 / RP62A).